A 555-amino-acid chain; its full sequence is Potassium-transporting ATPase potassium-binding subunit (555 aa).

A run of 10 helical transmembrane segments spans residues 2-22 (IWVA…PTGI), 60-80 (QYAL…YFIF), 130-150 (IGIT…VMAF), 173-193 (VFLP…VPQT), 246-266 (MSNI…PFTY), 278-298 (ILFV…TTSE), 374-394 (AGFV…GLMV), 412-432 (LIAV…ALAL), 483-503 (LVMF…AASL), and 525-545 (GIFI…MLVL).

This sequence belongs to the KdpA family. In terms of assembly, the system is composed of three essential subunits: KdpA, KdpB and KdpC.

It is found in the cell membrane. Its function is as follows. Part of the high-affinity ATP-driven potassium transport (or Kdp) system, which catalyzes the hydrolysis of ATP coupled with the electrogenic transport of potassium into the cytoplasm. This subunit binds the extracellular potassium ions and delivers the ions to the membrane domain of KdpB through an intramembrane tunnel. The chain is Potassium-transporting ATPase potassium-binding subunit from Bacillus mycoides (strain KBAB4) (Bacillus weihenstephanensis).